We begin with the raw amino-acid sequence, 87 residues long: DNA-directed RNA polymerase subunit omega (87 aa).

The protein belongs to the RNA polymerase subunit omega family. In terms of assembly, the RNAP catalytic core consists of 2 alpha, 1 beta, 1 beta' and 1 omega subunit. When a sigma factor is associated with the core the holoenzyme is formed, which can initiate transcription.

The enzyme catalyses RNA(n) + a ribonucleoside 5'-triphosphate = RNA(n+1) + diphosphate. Promotes RNA polymerase assembly. Latches the N- and C-terminal regions of the beta' subunit thereby facilitating its interaction with the beta and alpha subunits. The protein is DNA-directed RNA polymerase subunit omega of Ectopseudomonas mendocina (strain ymp) (Pseudomonas mendocina).